Consider the following 647-residue polypeptide: DNA ligase (647 aa).

Residues 30 to 34, 79 to 80, and Glu-105 contribute to the NAD(+) site; these read DEEYD and SM. The active-site N6-AMP-lysine intermediate is Lys-107. Positions 128, 162, and 301 each coordinate NAD(+). Zn(2+)-binding residues include Cys-395, Cys-398, Cys-411, and Cys-416. One can recognise a BRCT domain in the interval 570–647; that stretch reads KSDSVIFGKT…ESAFNELVKE (78 aa).

It belongs to the NAD-dependent DNA ligase family. LigA subfamily. The cofactor is Mg(2+). Mn(2+) is required as a cofactor.

It carries out the reaction NAD(+) + (deoxyribonucleotide)n-3'-hydroxyl + 5'-phospho-(deoxyribonucleotide)m = (deoxyribonucleotide)n+m + AMP + beta-nicotinamide D-nucleotide.. Functionally, DNA ligase that catalyzes the formation of phosphodiester linkages between 5'-phosphoryl and 3'-hydroxyl groups in double-stranded DNA using NAD as a coenzyme and as the energy source for the reaction. It is essential for DNA replication and repair of damaged DNA. This Campylobacter jejuni subsp. doylei (strain ATCC BAA-1458 / RM4099 / 269.97) protein is DNA ligase.